Here is a 706-residue protein sequence, read N- to C-terminus: MEKTFNLTRRDDGIAILTMDVPGETMNTLKAQFGPEISEILADIKSDSSIRGLVLISGKKDSFVAGADISMLDACKTAGDAKALSQQGHVVFNELEALTIPVVAAIHGACLGGGLELALACHQRVCSDDGKTMLGVPEVQLGLLPGGGGTQRLPRLVGITTALDMMLTGKQIRPKQALKMGLVNDVVPQTILLQTAVEMALAGKRAPKPVKKSLVNQVLEGTSFGRNIIFDQATKQVEKKTQGNYPAPAKIIDCVRQGITKGMQKGLEVEASHFAELVVSKESEALRSIFFATTEMKKETGAEGASPRKVKKAVILGGGLMGGGIASVTTTKAKIPVRVKDISEKGLSNALAYAYKLLDKGVKRRHMTPAARDNLMALMTTTTEYKGVKDADIVVEAVFEDLALKHQMVKDIERECGEHTIFASNTSSLPISQIAEAATRPENVIGLHYFSPVEKMPLVEVIAHAKTSPETIATTVAFARKQGKTPIVVQDGAGFYVNRILALYMNEAAQLLLEGQSVEHLDKALVKFGFPVGPITLLDEVGIDVGAKISPILEKELGERFKAPAAFDKLLGDDRKGRKNGKGFYQYGASSKKAKAVDESVYGVLGIKPGTNKDAKALAERCVVQMLNEAVRCLDDGIIASPRDGDIGAIFGIGFPPFLGGPFHYIDTLGAANLVRILEGYQSQLGSRFEPCERLKTMAQENAHFF.

Positions 1–188 (MEKTFNLTRR…KMGLVNDVVP (188 aa)) are enoyl-CoA hydratase. The tract at residues 308-706 (RKVKKAVILG…TMAQENAHFF (399 aa)) is 3-hydroxyacyl-CoA dehydrogenase.

It in the N-terminal section; belongs to the enoyl-CoA hydratase/isomerase family. In the central section; belongs to the 3-hydroxyacyl-CoA dehydrogenase family. As to quaternary structure, heterotetramer of two alpha chains (FadJ) and two beta chains (FadI).

It localises to the cytoplasm. It catalyses the reaction a (3S)-3-hydroxyacyl-CoA = a (2E)-enoyl-CoA + H2O. The enzyme catalyses a 4-saturated-(3S)-3-hydroxyacyl-CoA = a (3E)-enoyl-CoA + H2O. It carries out the reaction a (3S)-3-hydroxyacyl-CoA + NAD(+) = a 3-oxoacyl-CoA + NADH + H(+). The catalysed reaction is (3S)-3-hydroxybutanoyl-CoA = (3R)-3-hydroxybutanoyl-CoA. It participates in lipid metabolism; fatty acid beta-oxidation. Catalyzes the formation of a hydroxyacyl-CoA by addition of water on enoyl-CoA. Also exhibits 3-hydroxyacyl-CoA epimerase and 3-hydroxyacyl-CoA dehydrogenase activities. This is Fatty acid oxidation complex subunit alpha from Shewanella baltica (strain OS155 / ATCC BAA-1091).